Consider the following 169-residue polypeptide: NADH dehydrogenase [ubiquinone] 1 alpha subcomplex assembly factor 2 (169 aa).

A disordered region spans residues 116 to 169 (TSEELLPPPVQTQIKGHASAPYFGKEEPSVAPSSTGKTFQPGSWMPRDGKSHNQ). A Phosphoserine modification is found at serine 134. Polar residues predominate over residues 146-156 (APSSTGKTFQP).

The protein belongs to the complex I NDUFA12 subunit family. As to quaternary structure, interacts with ARMC9. As to expression, highly expressed in ESCC cells. Also expressed in heart, skeletal muscle, liver, and in fibroblasts.

The protein resides in the mitochondrion. Functionally, acts as a molecular chaperone for mitochondrial complex I assembly. Complex I functions in the transfer of electrons from NADH to the respiratory chain. The immediate electron acceptor for the enzyme is believed to be ubiquinone. Is involved in the initial steps of cilia formation, including removal of CP110 from the mother centrioles, docking of membrane vesicles to the mother centrioles, and establishment of the transition zone. The chain is NADH dehydrogenase [ubiquinone] 1 alpha subcomplex assembly factor 2 (NDUFAF2) from Homo sapiens (Human).